Consider the following 1058-residue polypeptide: Non-canonical non-ribosomal peptide synthetase FUB8 (1058 aa).

An adenylation (A) domain region spans residues 43 to 365; sequence EISRDEPDRV…LASVVMHPDE (323 aa). A Carrier domain is found at 566 to 643; sequence TTEDVVRSGI…QLSHSVWTHL (78 aa). Ser601 carries the O-(pantetheine 4'-phosphoryl)serine modification. The thioester reductase (TR) domain stretch occupies residues 680 to 921; the sequence is LTGTTGEIGS…IPIDLLAEVI (242 aa).

It participates in mycotoxin biosynthesis. In terms of biological role, non-canonical non-ribosomal peptide synthetase; part of the gene cluster that mediates the biosynthesis of fusaric acid, a mycotoxin with low to moderate toxicity to animals and humans, but with high phytotoxic properties. L-aspartate is suggested as fusaric acid amino acid precursor that is activated and further processed to O-acetyl-L-homoserine by cluster enzymes aspartate kinase FUB3 and homoserine O-acetyltransferase FUB5, as well as enzymes of the primary metabolism. The polyketide synthase (PKS) FUB1 generates the triketide trans-2-hexenal which is presumptively released by the hydrolase FUB4 and linked to the NRPS-bound amino acid precursor by NAD(P)-dependent dehydrogenase FUB6. FUB1, FUB4, and the non-canonical NRPS Fub8 may form an enzyme complex. Further processing of the NRPS-bound intermediate might be carried out by FUB6 and the sulfhydrylase FUB7, enabling a spontaneous electrocyclization to close the carbon backbone of fusaric acid. Dihydrofusaric acid is likely to be released via reduction by the thioester reductase (TR) domain of FUB8 whereupon the final oxidation to fusaric acid may (also) be performed by the FMN-dependent dehydrogenase FUB9. This Gibberella moniliformis (strain M3125 / FGSC 7600) (Maize ear and stalk rot fungus) protein is Non-canonical non-ribosomal peptide synthetase FUB8.